Reading from the N-terminus, the 84-residue chain is Coiled-coil-helix-coiled-coil-helix domain-containing protein 7 (84 aa).

In terms of domain architecture, CHCH spans 12–54 (SNPCLEETDASTKCMDENQYQKDLCTSYFIKYKNCRKFWNGIM). Short sequence motifs (cx9C motif) lie at residues 15-25 (CLEETDASTKC) and 36-46 (CTSYFIKYKNC). 2 disulfide bridges follow: Cys-15–Cys-46 and Cys-25–Cys-36.

It belongs to the CHCHD7 family.

The protein localises to the mitochondrion intermembrane space. This chain is Coiled-coil-helix-coiled-coil-helix domain-containing protein 7 (chchd7), found in Xenopus laevis (African clawed frog).